We begin with the raw amino-acid sequence, 288 residues long: Phosphatidylserine decarboxylase proenzyme (288 aa).

Residues aspartate 91, histidine 148, and serine 254 each act as charge relay system; for autoendoproteolytic cleavage activity in the active site. Serine 254 serves as the catalytic Schiff-base intermediate with substrate; via pyruvic acid; for decarboxylase activity. Residue serine 254 is modified to Pyruvic acid (Ser); by autocatalysis.

It belongs to the phosphatidylserine decarboxylase family. PSD-B subfamily. Prokaryotic type I sub-subfamily. In terms of assembly, heterodimer of a large membrane-associated beta subunit and a small pyruvoyl-containing alpha subunit. Requires pyruvate as cofactor. Is synthesized initially as an inactive proenzyme. Formation of the active enzyme involves a self-maturation process in which the active site pyruvoyl group is generated from an internal serine residue via an autocatalytic post-translational modification. Two non-identical subunits are generated from the proenzyme in this reaction, and the pyruvate is formed at the N-terminus of the alpha chain, which is derived from the carboxyl end of the proenzyme. The autoendoproteolytic cleavage occurs by a canonical serine protease mechanism, in which the side chain hydroxyl group of the serine supplies its oxygen atom to form the C-terminus of the beta chain, while the remainder of the serine residue undergoes an oxidative deamination to produce ammonia and the pyruvoyl prosthetic group on the alpha chain. During this reaction, the Ser that is part of the protease active site of the proenzyme becomes the pyruvoyl prosthetic group, which constitutes an essential element of the active site of the mature decarboxylase.

Its subcellular location is the cell membrane. The catalysed reaction is a 1,2-diacyl-sn-glycero-3-phospho-L-serine + H(+) = a 1,2-diacyl-sn-glycero-3-phosphoethanolamine + CO2. The protein operates within phospholipid metabolism; phosphatidylethanolamine biosynthesis; phosphatidylethanolamine from CDP-diacylglycerol: step 2/2. In terms of biological role, catalyzes the formation of phosphatidylethanolamine (PtdEtn) from phosphatidylserine (PtdSer). The chain is Phosphatidylserine decarboxylase proenzyme from Pseudoalteromonas translucida (strain TAC 125).